We begin with the raw amino-acid sequence, 1317 residues long: DNA-directed RNA polymerase subunit beta' (1317 aa).

Zn(2+) contacts are provided by Cys-214, Cys-286, Cys-293, and Cys-296. Positions 1279–1317 (RAYAGTQLSQDDEEFEETYDTDEDDFDMDDDDDFGDDED) are disordered. Over residues 1288–1317 (QDDEEFEETYDTDEDDFDMDDDDDFGDDED) the composition is skewed to acidic residues.

Belongs to the RNA polymerase beta' chain family. RpoC2 subfamily. As to quaternary structure, in cyanobacteria the RNAP catalytic core is composed of 2 alpha, 1 beta, 1 beta', 1 gamma and 1 omega subunit. When a sigma factor is associated with the core the holoenzyme is formed, which can initiate transcription. Zn(2+) is required as a cofactor.

It carries out the reaction RNA(n) + a ribonucleoside 5'-triphosphate = RNA(n+1) + diphosphate. Its function is as follows. DNA-dependent RNA polymerase catalyzes the transcription of DNA into RNA using the four ribonucleoside triphosphates as substrates. In Synechocystis sp. (strain ATCC 27184 / PCC 6803 / Kazusa), this protein is DNA-directed RNA polymerase subunit beta'.